A 414-amino-acid chain; its full sequence is Probable 26S proteasome regulatory subunit 6B (414 aa).

202-209 (GPPGCGKT) serves as a coordination point for ATP.

Belongs to the AAA ATPase family.

It localises to the cytoplasm. Its subcellular location is the nucleus. Functionally, the 26S proteasome is involved in the ATP-dependent degradation of ubiquitinated proteins. The regulatory (or ATPase) complex confers ATP dependency and substrate specificity to the 26S complex. This chain is Probable 26S proteasome regulatory subunit 6B (rpt-3), found in Caenorhabditis elegans.